A 352-amino-acid polypeptide reads, in one-letter code: Carbohydrate sulfotransferase 11 (352 aa).

At 1–16 (MKPALLEVMRMNRICR) the chain is on the cytoplasmic side. The helical; Signal-anchor for type II membrane protein transmembrane segment at 17-37 (MVLATCLGSFILVIFYFQSML) threads the bilayer. The Lumenal portion of the chain corresponds to 38–352 (HPVMRRNPFG…YSVPNYLKLD (315 aa)). Residues 124–130 (PKVACTN) and 186–194 (REPFERLVS) each bind 3'-phosphoadenylyl sulfate. N-linked (GlcNAc...) asparagine glycans are attached at residues Asn-205, Asn-223, Asn-321, and Asn-342.

It belongs to the sulfotransferase 2 family. In terms of processing, N-glycosylated; required for activity and stability.

The protein localises to the golgi apparatus membrane. The enzyme catalyses chondroitin beta-D-glucuronate + n 3'-phosphoadenylyl sulfate = chondroitin 4'-sulfate + n adenosine 3',5'-bisphosphate + n H(+). Catalyzes the transfer of sulfate to position 4 of the N-acetylgalactosamine (GalNAc) residue of chondroitin. Chondroitin sulfate constitutes the predominant proteoglycan present in cartilage and is distributed on the surfaces of many cells and extracellular matrices. Can also sulfate Gal residues in desulfated dermatan sulfate. Preferentially sulfates in GlcA-&gt;GalNAc unit than in IdoA-&gt;GalNAc unit. Does not form 4, 6-di-O-sulfated GalNAc when chondroitin sulfate C is used as an acceptor. This Rattus norvegicus (Rat) protein is Carbohydrate sulfotransferase 11 (Chst11).